The chain runs to 4007 residues: PKS-NRPS hybrid synthetase psoA (4007 aa).

The 437-residue stretch at 8–444 (KEPIAIIGTG…GTNCHAIVES (437 aa)) folds into the Ketosynthase family 3 (KS3) domain. Active-site for beta-ketoacyl synthase activity residues include Cys-182, His-321, and His-364. The interval 575–897 (VFTGQGAQWA…VLDRKADDIL (323 aa)) is malonyl-CoA:ACP transacylase (MAT) domain. The interval 969–1105 (HPLLGSRTPD…GHIRITLAAE (137 aa)) is N-terminal hotdog fold. The tract at residues 969 to 1147 (HPLLGSRTPD…LSYSGPFRAM (179 aa)) is dehydratase (DH) domain. The 308-residue stretch at 969–1276 (HPLLGSRTPD…MSSFLPASEK (308 aa)) folds into the PKS/mFAS DH domain. His-1001 (proton acceptor; for dehydratase activity) is an active-site residue. Residues 1120-1276 (DLLPTSVDRF…MSSFLPASEK (157 aa)) are C-terminal hotdog fold. Asp-1179 serves as the catalytic Proton donor; for dehydratase activity. The tract at residues 2131–2305 (TYLLVGLTGH…PASVIDIGMV (175 aa)) is ketoreductase (KR) domain. A Carrier 1 domain is found at 2418-2495 (EARKVMENAL…QICDEVVASL (78 aa)). An O-(pantetheine 4'-phosphoryl)serine modification is found at Ser-2455. A disordered region spans residues 2513-2550 (PAHKLRPWDKPSADTKRTDSIAPVPRSQIAANGPNGLP). Residues 2518–2531 (RPWDKPSADTKRTD) show a composition bias toward basic and acidic residues. The condensation (C) domain stretch occupies residues 2589–2885 (QPLSLGQSRL…LETIPLWFKV (297 aa)). Residues 3076–3478 (TYVQLAERAN…LGDVARALVQ (403 aa)) form an adenylation (A) domain region. The Carrier 2 domain maps to 3576 to 3652 (TPTEARLRDV…LLAARLDGTS (77 aa)). Residue Ser-3612 is modified to O-(pantetheine 4'-phosphoryl)serine. The interval 3696–3920 (LTGATGFLGG…INVETVSNNI (225 aa)) is reductase (R) domain.

It in the C-terminal section; belongs to the NRP synthetase family.

It participates in secondary metabolite biosynthesis. Functionally, PKS-NRPS hybrid synthetase; part of the gene cluster that mediates the biosynthesis of pseurotin A, a competitive inhibitor of chitin synthase and an inducer of nerve-cell proliferation. The PKS-NRPS hybrid synthetase psoA is responsible for the biosynthesis of azaspirene, one of the first intermediates having the 1-oxa-7-azaspiro[4,4]-non-2-ene-4,6-dione core of pseurotin, via condensation of one acetyl-CoA, 4 malonyl-CoA, and a L-phenylalanine molecule. The dual-functional monooxygenase/methyltransferase psoF seems to be involved in the addition of the C3 methyl group onto the pseurotin scaffold. Azaspirene is then converted to synerazol through 4 steps including oxidation of C17 by the cytochrome P450 monooxygenase psoD, O-methylation of the hydroxy group of C8 by the methyltransferase psoC, and the trans-to-cis isomerization of the C13 olefin by the glutathione S-transferase psoE. The fourth step of synerazol production is performed by the dual-functional monooxygenase/methyltransferase psoF which seems to catalyze the epoxidation of the intermediate deepoxy-synerazol. Synerazol can be attacked by a water molecule nonenzymatically at two different positions to yield two diol products, pseurotin A and pseurotin D. This Aspergillus fumigatus (strain ATCC MYA-4609 / CBS 101355 / FGSC A1100 / Af293) (Neosartorya fumigata) protein is PKS-NRPS hybrid synthetase psoA.